A 351-amino-acid polypeptide reads, in one-letter code: Maleylacetate reductase (351 aa).

The protein belongs to the iron-containing alcohol dehydrogenase family. In terms of assembly, homodimer.

The enzyme catalyses 3-oxoadipate + NAD(+) = maleylacetate + NADH + H(+). The protein operates within aromatic compound metabolism. In terms of biological role, involved in the gamma-resorcylate (2,6-dihydroxybenzoate) catabolism. Catalyzes the reduction of maleylacetate to 3-oxoadipate. The protein is Maleylacetate reductase of Rhizobium sp. (strain MTP-10005).